Here is a 302-residue protein sequence, read N- to C-terminus: Protoheme IX farnesyltransferase (302 aa).

Helical transmembrane passes span 26–46, 48–68, 98–118, 120–140, 148–168, 174–194, 221–241, 244–264, and 280–300; these read VVVLMVFTAIVGMFLASPGQV, WVALTVGSLGIALAAGSAAAL, VLGFSSLLGVAGLGMLALWIN, LTAALTFASLIGYALVYTLYL, IVIGGAAGAAPPLLGWTAVTG, ALLLFLIVFVWTPPHFWALAV, ILLYTVLLLAVSLLPWATFMG, LYLAAAVGLGGWYLMLNVRLL, and IIYLFGLFAALLVDRQLPVWL.

Belongs to the UbiA prenyltransferase family. Protoheme IX farnesyltransferase subfamily.

It localises to the cell inner membrane. It catalyses the reaction heme b + (2E,6E)-farnesyl diphosphate + H2O = Fe(II)-heme o + diphosphate. It functions in the pathway porphyrin-containing compound metabolism; heme O biosynthesis; heme O from protoheme: step 1/1. In terms of biological role, converts heme B (protoheme IX) to heme O by substitution of the vinyl group on carbon 2 of heme B porphyrin ring with a hydroxyethyl farnesyl side group. In Alkalilimnicola ehrlichii (strain ATCC BAA-1101 / DSM 17681 / MLHE-1), this protein is Protoheme IX farnesyltransferase.